We begin with the raw amino-acid sequence, 382 residues long: Galactokinase (382 aa).

34–37 (EHTD) provides a ligand contact to substrate. 124–130 (GAGLSSS) lines the ATP pocket. Mg(2+) is bound by residues S130 and E162. Catalysis depends on D174, which acts as the Proton acceptor. Y223 contributes to the substrate binding site.

It belongs to the GHMP kinase family. GalK subfamily.

The protein localises to the cytoplasm. The catalysed reaction is alpha-D-galactose + ATP = alpha-D-galactose 1-phosphate + ADP + H(+). It participates in carbohydrate metabolism; galactose metabolism. Its function is as follows. Catalyzes the transfer of the gamma-phosphate of ATP to D-galactose to form alpha-D-galactose-1-phosphate (Gal-1-P). The sequence is that of Galactokinase from Salmonella arizonae (strain ATCC BAA-731 / CDC346-86 / RSK2980).